Consider the following 122-residue polypeptide: Large ribosomal subunit protein uL14 (122 aa).

It belongs to the universal ribosomal protein uL14 family. As to quaternary structure, part of the 50S ribosomal subunit. Forms a cluster with proteins L3 and L19. In the 70S ribosome, L14 and L19 interact and together make contacts with the 16S rRNA in bridges B5 and B8.

Its function is as follows. Binds to 23S rRNA. Forms part of two intersubunit bridges in the 70S ribosome. This is Large ribosomal subunit protein uL14 from Alcanivorax borkumensis (strain ATCC 700651 / DSM 11573 / NCIMB 13689 / SK2).